A 67-amino-acid polypeptide reads, in one-letter code: MRMFRITACVPSQTRIRTQRELQNTYFTKLVPYDNSFREQQRIMKMGGKIVKVELATGRPGTNAGLA.

The 56-residue stretch at 1–56 (MRMFRITACVPSQTRIRTQRELQNTYFTKLVPYDNSFREQQRIMKMGGKIVKVELA) folds into the CpcD-like domain.

It belongs to the phycobilisome linker protein family.

The protein resides in the cellular thylakoid membrane. In terms of biological role, rod linker protein, associated with allophycocyanin. Linker polypeptides determine the state of aggregation and the location of the disk-shaped phycobiliprotein units within the phycobilisome and modulate their spectroscopic properties in order to mediate a directed and optimal energy transfer. The sequence is that of Phycobilisome 7.8 kDa linker polypeptide, allophycocyanin-associated, core (apcC) from Synechocystis sp. (strain ATCC 27184 / PCC 6803 / Kazusa).